The chain runs to 269 residues: Myelin protein zero-like protein 1 (269 aa).

Positions 1-35 are cleaved as a signal peptide; the sequence is MAASAGAGAVIAAPDSRRWLWSVLAAALGLLTAGV. An Ig-like V-type domain is found at 36–146; the sequence is SALEVYTPKE…VKNPPDIVVQ (111 aa). Over 36–162 the chain is Extracellular; it reads SALEVYTPKE…YVVEKENLPV (127 aa). N-linked (GlcNAc...) asparagine glycans are attached at residues Asn50 and Asn130. An intrachain disulfide couples Cys58 to Cys135. A helical membrane pass occupies residues 163-183; that stretch reads FPVWVVVGIVTAVVLGLTLLI. Residues 184–269 are Cytoplasmic-facing; sequence SMILAVLYRR…SVVYADIRKN (86 aa). Residues 199–238 are disordered; that stretch reads DYTGCSTSESLSPVKQAPRKSPSDTEGLVKSLPSGSHQGP. A compositionally biased stretch (polar residues) spans 202-211; that stretch reads GCSTSESLSP. Phosphoserine occurs at positions 204, 206, 208, 210, 219, and 221. The ITIM motif 1 motif lies at 239 to 244; sequence VIYAQL. Tyr241 bears the Phosphotyrosine mark. Position 260 is a phosphoserine (Ser260). Residues 261–266 carry the ITIM motif 2 motif; that stretch reads VVYADI. Phosphotyrosine is present on Tyr263.

This sequence belongs to the myelin P0 protein family. In terms of assembly, interacts with phosphorylated PTPN11/SHP-2. Post-translationally, phosphorylated on tyrosine residues upon stimulation with pervanadate and concanavalin-A (ConA). Phosphorylation at Tyr-241 and Tyr-263 is required for interaction with PTPN11/SHP-2. Dephosphorylated by PTPN11/SHP-2 (in vitro). N-glycosylated. N-glycosylation is required for concanavalin A binding. In terms of tissue distribution, widely expressed with highest levels in heart, placenta, kidney and pancreas. Isoform 3 is relatively abundant in hematopoietic tissues and fetal liver. Isoform 1 and isoform 3 are expressed in CD14- PB monocytes and pre-B cell progenitors. Isoform 3 appears to be the major isoform in CD34- promyelocytic and promonocytic cells. During differentiation in monocytic cells, the expression level of isoform 3 decreases and that of isoform 1 increases. Isoform 1 is prominent in stromal cells and, to a lesser extent, in umbilical vein endothelial cells and erythroid progenitors. Isoform 2 is expressed in a erythroid progenitor cell line.

The protein resides in the membrane. Its function is as follows. Cell surface receptor, which is involved in signal transduction processes. Recruits PTPN11/SHP-2 to the cell membrane and is a putative substrate of PTPN11/SHP-2. Is a major receptor for concanavalin-A (ConA) and is involved in cellular signaling induced by ConA, which probably includes Src family tyrosine-protein kinases. Isoform 3 seems to have a dominant negative role; it blocks tyrosine phosphorylation of MPZL1 induced by ConA. Isoform 1, but not isoform 2 and isoform 3, may be involved in regulation of integrin-mediated cell motility. The chain is Myelin protein zero-like protein 1 (MPZL1) from Homo sapiens (Human).